Reading from the N-terminus, the 258-residue chain is MRPLILLSNDDGYSAPGLTAVRDELARHADVVVCAPAVNQSATSHSLSLHRVLRLLEAAPGVFAVDGTPADCIYVALHAGTRVLPRRPDLVVSGMNHGLNLGADIFYSGTVAAAREGALRGVPSIALSADAGASLPAAAALGVKLALALHRAAGQEGRRPAPLLNVNIPAGSSWPVRATRMGARLYTEEVIFRRDPRGHEYLWIGGAGVRHDLVPGSDTEAYDAGAVSVTPLTLDLFAAQHEGIAGLLAAELNDGPIP.

Residues aspartate 10, aspartate 11, serine 41, and asparagine 96 each coordinate a divalent metal cation.

This sequence belongs to the SurE nucleotidase family. The cofactor is a divalent metal cation.

It is found in the cytoplasm. The enzyme catalyses a ribonucleoside 5'-phosphate + H2O = a ribonucleoside + phosphate. Its function is as follows. Nucleotidase that shows phosphatase activity on nucleoside 5'-monophosphates. The polypeptide is 5'-nucleotidase SurE (Sorangium cellulosum (strain So ce56) (Polyangium cellulosum (strain So ce56))).